We begin with the raw amino-acid sequence, 329 residues long: MDAQSKEVDALVQKITGLHAAIAKLPSLSPSPDVDALFTDLVTACVPPSPVDVTKLAPEAQAMREGLIRLCSEAEGKLEAHYSDMLAAFDNPLDHLGVFPYYSNYINLSKLEYELLARYVPGGIAPARVAFIGSGPLPFSSYVLAARHLPDTVFDNYVPVRAANDRATRLFRADKDVGARMSFHTADVADLTDELATYDVVFLAALVGMAAEDKGQGDPHLGAHMADGAALVRSAHGARGFLYPIVDPQDIGRGGFEVLAVCHPDDDVVNSVIIAQKSKDMFANGPRNGCGGRYARGTVPVVSPPCRFGEMVADVTQKREEFAKAEVAF.

Belongs to the nicotianamine synthase (NAS)-like family.

It catalyses the reaction 3 S-adenosyl-L-methionine = nicotianamine + 3 S-methyl-5'-thioadenosine + 3 H(+). Its function is as follows. Synthesizes nicotianamine, a polyamine that is the first intermediate in the synthesis of the phytosiderophores of the mugineic acid type found in gramineae which serves as a sensor for the physiological iron status within the plant, and/or might be involved in the transport of iron. In Hordeum vulgare (Barley), this protein is Probable nicotianamine synthase 7 (NAS7).